The chain runs to 319 residues: Acetyl-coenzyme A carboxylase carboxyl transferase subunit alpha (319 aa).

A CoA carboxyltransferase C-terminal domain is found at 35–296; that stretch reads NIDEEVHRLR…KAQLLADLAD (262 aa).

It belongs to the AccA family. In terms of assembly, acetyl-CoA carboxylase is a heterohexamer composed of biotin carboxyl carrier protein (AccB), biotin carboxylase (AccC) and two subunits each of ACCase subunit alpha (AccA) and ACCase subunit beta (AccD).

It is found in the cytoplasm. The enzyme catalyses N(6)-carboxybiotinyl-L-lysyl-[protein] + acetyl-CoA = N(6)-biotinyl-L-lysyl-[protein] + malonyl-CoA. Its pathway is lipid metabolism; malonyl-CoA biosynthesis; malonyl-CoA from acetyl-CoA: step 1/1. Functionally, component of the acetyl coenzyme A carboxylase (ACC) complex. First, biotin carboxylase catalyzes the carboxylation of biotin on its carrier protein (BCCP) and then the CO(2) group is transferred by the carboxyltransferase to acetyl-CoA to form malonyl-CoA. This chain is Acetyl-coenzyme A carboxylase carboxyl transferase subunit alpha, found in Klebsiella pneumoniae (strain 342).